The primary structure comprises 452 residues: Phosphoglucosamine mutase (452 aa).

Ser-112 serves as the catalytic Phosphoserine intermediate. Mg(2+) contacts are provided by Ser-112, Asp-251, Asp-253, and Asp-255. Phosphoserine is present on Ser-112.

Belongs to the phosphohexose mutase family. The cofactor is Mg(2+). Post-translationally, activated by phosphorylation.

The enzyme catalyses alpha-D-glucosamine 1-phosphate = D-glucosamine 6-phosphate. In terms of biological role, catalyzes the conversion of glucosamine-6-phosphate to glucosamine-1-phosphate. In Bordetella pertussis (strain Tohama I / ATCC BAA-589 / NCTC 13251), this protein is Phosphoglucosamine mutase.